The chain runs to 334 residues: Protein OPG181 (334 aa).

This sequence belongs to the orthopoxvirus OPG181 family.

In Bos taurus (Bovine), this protein is Protein OPG181 (OPG181).